A 248-amino-acid chain; its full sequence is Probable transcriptional regulatory protein Noc_0137 (248 aa).

It belongs to the TACO1 family.

The protein resides in the cytoplasm. The polypeptide is Probable transcriptional regulatory protein Noc_0137 (Nitrosococcus oceani (strain ATCC 19707 / BCRC 17464 / JCM 30415 / NCIMB 11848 / C-107)).